Consider the following 411-residue polypeptide: LL-diaminopimelate aminotransferase (411 aa).

Positions 15 and 42 each coordinate substrate. Residues Tyr-72, 108-109 (SK), Tyr-132, Asn-187, Tyr-218, and 246-248 (SFS) contribute to the pyridoxal 5'-phosphate site. Lys-109, Tyr-132, and Asn-187 together coordinate substrate. Lys-249 is subject to N6-(pyridoxal phosphate)lysine. Arg-257 and Asn-292 together coordinate pyridoxal 5'-phosphate. Asn-292 and Arg-388 together coordinate substrate.

The protein belongs to the class-I pyridoxal-phosphate-dependent aminotransferase family. LL-diaminopimelate aminotransferase subfamily. Homodimer. Pyridoxal 5'-phosphate is required as a cofactor.

It carries out the reaction (2S,6S)-2,6-diaminopimelate + 2-oxoglutarate = (S)-2,3,4,5-tetrahydrodipicolinate + L-glutamate + H2O + H(+). The protein operates within amino-acid biosynthesis; L-lysine biosynthesis via DAP pathway; LL-2,6-diaminopimelate from (S)-tetrahydrodipicolinate (aminotransferase route): step 1/1. Involved in the synthesis of meso-diaminopimelate (m-DAP or DL-DAP), required for both lysine and peptidoglycan biosynthesis. Catalyzes the direct conversion of tetrahydrodipicolinate to LL-diaminopimelate. The polypeptide is LL-diaminopimelate aminotransferase (Synechococcus elongatus (strain ATCC 33912 / PCC 7942 / FACHB-805) (Anacystis nidulans R2)).